The primary structure comprises 134 residues: U35-theraphotoxin-Cg1a (134 aa).

The first 18 residues, 1-18 (MLVTLLETFSVVFQVANG), serve as a signal peptide directing secretion. A propeptide spanning residues 19 to 56 (DGNCVPRFQDDVEFCDNYILEAVTEASKMIAPRAREQK) is cleaved from the precursor.

Expressed by the venom gland.

It localises to the secreted. In terms of biological role, probable secreted venom toxin. The chain is U35-theraphotoxin-Cg1a from Chilobrachys guangxiensis (Chinese earth tiger tarantula).